A 216-amino-acid chain; its full sequence is 3-isopropylmalate dehydratase small subunit (216 aa).

This sequence belongs to the LeuD family. LeuD type 1 subfamily. As to quaternary structure, heterodimer of LeuC and LeuD.

It catalyses the reaction (2R,3S)-3-isopropylmalate = (2S)-2-isopropylmalate. It functions in the pathway amino-acid biosynthesis; L-leucine biosynthesis; L-leucine from 3-methyl-2-oxobutanoate: step 2/4. In terms of biological role, catalyzes the isomerization between 2-isopropylmalate and 3-isopropylmalate, via the formation of 2-isopropylmaleate. This Burkholderia thailandensis (strain ATCC 700388 / DSM 13276 / CCUG 48851 / CIP 106301 / E264) protein is 3-isopropylmalate dehydratase small subunit.